A 275-amino-acid chain; its full sequence is NH(3)-dependent NAD(+) synthetase (275 aa).

Position 50-57 (50-57) interacts with ATP; that stretch reads GISGGVDS. Asp-56 serves as a coordination point for Mg(2+). Arg-147 is a deamido-NAD(+) binding site. Thr-167 contacts ATP. Residue Glu-172 coordinates Mg(2+). Residues Lys-180 and Asp-187 each contribute to the deamido-NAD(+) site. The ATP site is built by Lys-196 and Thr-218. 267–268 lines the deamido-NAD(+) pocket; it reads HK.

Belongs to the NAD synthetase family. As to quaternary structure, homodimer.

The catalysed reaction is deamido-NAD(+) + NH4(+) + ATP = AMP + diphosphate + NAD(+) + H(+). It functions in the pathway cofactor biosynthesis; NAD(+) biosynthesis; NAD(+) from deamido-NAD(+) (ammonia route): step 1/1. Functionally, catalyzes the ATP-dependent amidation of deamido-NAD to form NAD. Uses ammonia as a nitrogen source. The chain is NH(3)-dependent NAD(+) synthetase from Ectopseudomonas mendocina (strain ymp) (Pseudomonas mendocina).